Consider the following 203-residue polypeptide: uncharacterized protein (203 aa).

This is an uncharacterized protein from Magallana gigas (Pacific oyster).